A 586-amino-acid chain; its full sequence is Proline--tRNA ligase (586 aa).

This sequence belongs to the class-II aminoacyl-tRNA synthetase family. ProS type 1 subfamily. Homodimer.

The protein localises to the cytoplasm. The catalysed reaction is tRNA(Pro) + L-proline + ATP = L-prolyl-tRNA(Pro) + AMP + diphosphate. Functionally, catalyzes the attachment of proline to tRNA(Pro) in a two-step reaction: proline is first activated by ATP to form Pro-AMP and then transferred to the acceptor end of tRNA(Pro). As ProRS can inadvertently accommodate and process non-cognate amino acids such as alanine and cysteine, to avoid such errors it has two additional distinct editing activities against alanine. One activity is designated as 'pretransfer' editing and involves the tRNA(Pro)-independent hydrolysis of activated Ala-AMP. The other activity is designated 'posttransfer' editing and involves deacylation of mischarged Ala-tRNA(Pro). The misacylated Cys-tRNA(Pro) is not edited by ProRS. The chain is Proline--tRNA ligase from Kineococcus radiotolerans (strain ATCC BAA-149 / DSM 14245 / SRS30216).